The following is a 678-amino-acid chain: Penicillin-binding protein activator LpoA (678 aa).

An N-terminal signal peptide occupies residues 1-26; it reads MVPSTFSRLKAARCLPVVLAALIFAG. Cys-27 is lipidated: N-palmitoyl cysteine. Cys-27 carries the S-diacylglycerol cysteine lipid modification. Disordered regions lie at residues 304-338 and 495-530; these read AEQP…SVPV and IALT…QFTN. Low complexity predominate over residues 513–529; it reads TTNNPTLQTTPTDDQFT.

Belongs to the LpoA family. In terms of assembly, interacts with PBP1a.

Its subcellular location is the cell outer membrane. Its function is as follows. Regulator of peptidoglycan synthesis that is essential for the function of penicillin-binding protein 1A (PBP1a). In Escherichia coli O6:H1 (strain CFT073 / ATCC 700928 / UPEC), this protein is Penicillin-binding protein activator LpoA.